The sequence spans 628 residues: Nucleoside-triphosphatase 2 (628 aa).

The N-terminal stretch at 1–25 (MWLPVYVPLLLVFGVSLSLPHGSLG) is a signal peptide. Glutamate 236 (proton acceptor) is an active-site residue. An N-linked (GlcNAc...) asparagine glycan is attached at asparagine 432.

This sequence belongs to the GDA1/CD39 NTPase family. Homotetramer.

It is found in the secreted. It localises to the parasitophorous vacuole. The catalysed reaction is a ribonucleoside 5'-triphosphate + H2O = a ribonucleoside 5'-diphosphate + phosphate + H(+). Its function is as follows. May perform an important processing step in the conversion of high energy nucleotides prior to uptake by the parasite. NTPAse-II has a specific activity 4.5-fold lower than NTPAse-I in hydrolysis of ATP. The primary difference between these isozymes lies in their ability to hydrolyze nucleoside triphosphate versus diphosphate substrates. While NTPAse-II hydrolyzes ATP to ADP and ADP to AMP at almost the same rate, NTPAse-I hydrolyzes ADP to AMP at a much slower rate (0.7% of the rate for ATP). In Toxoplasma gondii, this protein is Nucleoside-triphosphatase 2 (NTP1).